A 739-amino-acid polypeptide reads, in one-letter code: NAD(P)H-quinone oxidoreductase subunit 5, chloroplastic (739 aa).

A run of 16 helical transmembrane segments spans residues 9 to 29, 40 to 60, 89 to 109, 125 to 145, 147 to 167, 185 to 205, 224 to 244, 258 to 278, 283 to 303, 327 to 347, 354 to 374, 396 to 416, 425 to 445, 546 to 566, 605 to 625, and 718 to 738; these read LIIPFALLPVPMLIGVALIFF, WAFPSVLLLSIVMIFSFNLSI, IDSLTSIMLILITTVGILVLI, FAYMSFSNISMLGLVTSSNLI, IHIFWELVGVCSYLLIGFWFT, GDFGLLLGILGFYWITGSFEF, LFVILCASLLFVGAVAKSAQF, TPISALIHAATMVAAGIFLVA, LFTVIPYIMNIISLIGIITIL, LGYIMLALGMGSYRAALFHLI, ALLFLGSGSIIHSMESIVGYS, TAFFLGTLSLCGIPPLACFWS, WLYSPIFAIIACSTAGLTAFY, LFPLLVLVLFTFFVGSIGIPF, IFSVSIAYFGIFISSFLYRPI, and ISSYLFLYLFSVSIFFLIFQV.

The protein belongs to the complex I subunit 5 family. As to quaternary structure, NDH is composed of at least 16 different subunits, 5 of which are encoded in the nucleus.

The protein resides in the plastid. It localises to the chloroplast thylakoid membrane. It catalyses the reaction a plastoquinone + NADH + (n+1) H(+)(in) = a plastoquinol + NAD(+) + n H(+)(out). It carries out the reaction a plastoquinone + NADPH + (n+1) H(+)(in) = a plastoquinol + NADP(+) + n H(+)(out). Functionally, NDH shuttles electrons from NAD(P)H:plastoquinone, via FMN and iron-sulfur (Fe-S) centers, to quinones in the photosynthetic chain and possibly in a chloroplast respiratory chain. The immediate electron acceptor for the enzyme in this species is believed to be plastoquinone. Couples the redox reaction to proton translocation, and thus conserves the redox energy in a proton gradient. The sequence is that of NAD(P)H-quinone oxidoreductase subunit 5, chloroplastic (ndhF) from Buxus microphylla (Littleleaf boxwood).